Consider the following 450-residue polypeptide: Membrane-bound lytic murein transglycosylase F 2 (450 aa).

Positions 1 to 20 (MRTWIAILAVVLVLLLNACT) are cleaved as a signal peptide. The non-LT domain stretch occupies residues 21–261 (DGPEDGPRLE…AMENRYYTYV (241 aa)). The segment at 262–450 (GEFDFVDLRA…YRDVIRQAFE (189 aa)) is LT domain. Glu308 is a catalytic residue.

In the N-terminal section; belongs to the bacterial solute-binding protein 3 family. The protein in the C-terminal section; belongs to the transglycosylase Slt family.

The protein resides in the cell outer membrane. It catalyses the reaction Exolytic cleavage of the (1-&gt;4)-beta-glycosidic linkage between N-acetylmuramic acid (MurNAc) and N-acetylglucosamine (GlcNAc) residues in peptidoglycan, from either the reducing or the non-reducing ends of the peptidoglycan chains, with concomitant formation of a 1,6-anhydrobond in the MurNAc residue.. Murein-degrading enzyme that degrades murein glycan strands and insoluble, high-molecular weight murein sacculi, with the concomitant formation of a 1,6-anhydromuramoyl product. Lytic transglycosylases (LTs) play an integral role in the metabolism of the peptidoglycan (PG) sacculus. Their lytic action creates space within the PG sacculus to allow for its expansion as well as for the insertion of various structures such as secretion systems and flagella. The protein is Membrane-bound lytic murein transglycosylase F 2 of Alkalilimnicola ehrlichii (strain ATCC BAA-1101 / DSM 17681 / MLHE-1).